The primary structure comprises 111 residues: Probable 4-amino-4-deoxy-L-arabinose-phosphoundecaprenol flippase subunit ArnE (111 aa).

Over 1-37 the chain is Cytoplasmic; the sequence is MIWLVLILASLLSVTGQLCQKQATRPVAINKRRKHIA. Residues 38–58 form a helical membrane-spanning segment; sequence LWLGLGLVCLGLAMVLWLLVL. An EamA domain is found at 40–109; that stretch reads LGLGLVCLGL…IIGGIVILGS (70 aa). Topologically, residues 59 to 60 are periplasmic; sequence QT. The helical transmembrane segment at 61 to 81 threads the bilayer; the sequence is VPVGIAYPMLSLNFVWVTLAA. At 82 to 87 the chain is on the cytoplasmic side; sequence TKLWHE. Residues 88–108 traverse the membrane as a helical segment; that stretch reads PVSFRHWCGVAFIIGGIVILG. Over 109 to 111 the chain is Periplasmic; it reads STV.

Belongs to the ArnE family. As to quaternary structure, heterodimer of ArnE and ArnF.

Its subcellular location is the cell inner membrane. Its pathway is bacterial outer membrane biogenesis; lipopolysaccharide biosynthesis. In terms of biological role, translocates 4-amino-4-deoxy-L-arabinose-phosphoundecaprenol (alpha-L-Ara4N-phosphoundecaprenol) from the cytoplasmic to the periplasmic side of the inner membrane. The polypeptide is Probable 4-amino-4-deoxy-L-arabinose-phosphoundecaprenol flippase subunit ArnE (Escherichia fergusonii (strain ATCC 35469 / DSM 13698 / CCUG 18766 / IAM 14443 / JCM 21226 / LMG 7866 / NBRC 102419 / NCTC 12128 / CDC 0568-73)).